Reading from the N-terminus, the 155-residue chain is Small ribosomal subunit protein uS7 (155 aa).

Belongs to the universal ribosomal protein uS7 family. As to quaternary structure, part of the 30S ribosomal subunit. Contacts proteins S9 and S11.

Functionally, one of the primary rRNA binding proteins, it binds directly to 16S rRNA where it nucleates assembly of the head domain of the 30S subunit. Is located at the subunit interface close to the decoding center, probably blocks exit of the E-site tRNA. The sequence is that of Small ribosomal subunit protein uS7 from Xylella fastidiosa (strain 9a5c).